Here is a 114-residue protein sequence, read N- to C-terminus: Iron-sulfur cluster insertion protein ErpA (114 aa).

Iron-sulfur cluster contacts are provided by cysteine 42, cysteine 106, and cysteine 108.

It belongs to the HesB/IscA family. Homodimer. The cofactor is iron-sulfur cluster.

Its function is as follows. Required for insertion of 4Fe-4S clusters for at least IspG. This is Iron-sulfur cluster insertion protein ErpA from Shigella boydii serotype 18 (strain CDC 3083-94 / BS512).